Here is a 543-residue protein sequence, read N- to C-terminus: EH domain-containing protein 2 (543 aa).

Position 3 is a phosphoserine (serine 3). The Dynamin-type G domain occupies 55-286 (FDGKPMVLVA…DLFRDIQGLP (232 aa)). The tract at residues 65 to 72 (GQYSTGKT) is G1 motif. 65–72 (GQYSTGKT) serves as a coordination point for ATP. A G2 motif region spans residues 91–92 (EP). Residues 120–122 (KPF) carry the KPF loop; caveolar targeting motif. The segment at 153-156 (DTPG) is G3 motif. The interval 219–222 (NKAD) is G4 motif. Lysine 220 contacts ATP. Position 243 (valine 243) is a region of interest, G5 motif. Residue tryptophan 258 participates in ATP binding. Residues 320–340 (SVFGKENKKKQLILKLPVIFA) are mediates membrane-binding. Residues serine 438, serine 468, serine 470, serine 484, and serine 493 each carry the phosphoserine modification. The EH domain occupies 449 to 537 (DKSKYDEIFY…RRLVPPSKRR (89 aa)). One can recognise an EF-hand domain in the interval 481 to 516 (LPNSVLGRIWKLSDVDRDGMLDDEEFALASHLIEAK). Ca(2+)-binding residues include aspartate 494, aspartate 496, aspartate 498, methionine 500, and glutamate 505. Residues 523–543 (PANLPRRLVPPSKRRHKGSAE) are disordered. Basic residues predominate over residues 534 to 543 (SKRRHKGSAE).

Belongs to the TRAFAC class dynamin-like GTPase superfamily. Dynamin/Fzo/YdjA family. EHD subfamily. As to quaternary structure, homodimer and homooligomer. Interacts with EHD1. May also interact with EHD3 and EHD4. Interacts with MYOF. Interacts with EHBP1. Interacts with FER1L5 (via second C2 domain). Interacts with CAV1 in a cholesterol-dependent manner. Interacts (via EH domain) with PACSIN2 (via NPF motifs); this interaction probably stabilizes the caveolae. As to expression, highly expressed in heart and moderately expressed in placenta, lung, and skeletal muscle.

The protein resides in the cell membrane. It localises to the membrane. The protein localises to the caveola. Its subcellular location is the endosome membrane. It is found in the cytoplasm. The protein resides in the cytosol. With respect to regulation, the very low intrinsic ATPase activity is increased upon interaction with liposomes. Its function is as follows. ATP- and membrane-binding protein that controls membrane reorganization/tubulation upon ATP hydrolysis. Plays a role in membrane trafficking between the plasma membrane and endosomes. Important for the internalization of GLUT4. Required for fusion of myoblasts to skeletal muscle myotubes. Required for normal translocation of FER1L5 to the plasma membrane. Regulates the equilibrium between cell surface-associated and cell surface-dissociated caveolae by constraining caveolae at the cell membrane. This chain is EH domain-containing protein 2, found in Homo sapiens (Human).